A 316-amino-acid chain; its full sequence is uncharacterized protein (316 aa).

Disordered stretches follow at residues alanine 82 to asparagine 105 and alanine 238 to glutamate 257. 2 stretches are compositionally biased toward low complexity: residues alanine 84–threonine 96 and serine 239–threonine 255.

This sequence belongs to the MG307/MG309/MG338 family.

This is an uncharacterized protein from Mycoplasma pneumoniae (strain ATCC 29342 / M129 / Subtype 1) (Mycoplasmoides pneumoniae).